Reading from the N-terminus, the 29-residue chain is RICPRILMECSSDSDCLAECICLEQGFCG.

3 disulfide bridges follow: Cys-3–Cys-20, Cys-10–Cys-22, and Cys-16–Cys-28.

This sequence belongs to the protease inhibitor I7 (squash-type serine protease inhibitor) family.

The protein resides in the secreted. Its function is as follows. Inhibits trypsin. The protein is Trypsin inhibitor 1 of Luffa aegyptiaca (Sponge gourd).